Here is a 510-residue protein sequence, read N- to C-terminus: NAD(P)H-quinone oxidoreductase subunit 2 B, chloroplastic (510 aa).

12 helical membrane-spanning segments follow: residues 24–44, 59–79, 99–119, 124–144, 149–169, 183–203, 229–249, 295–315, 323–343, 354–374, 395–415, and 418–438; these read LLLF…GLIL, WFYF…LFRW, IFQF…VEYI, MAIT…MFLC, LITI…LSGY, YLLM…WLYG, ISIA…PAPF, WHLL…LLAI, MLAY…IVGD, YMLF…LFGL, ALSL…AGFF, and LYLF…IGLL.

Belongs to the complex I subunit 2 family. As to quaternary structure, NDH is composed of at least 16 different subunits, 5 of which are encoded in the nucleus.

The protein resides in the plastid. Its subcellular location is the chloroplast thylakoid membrane. It carries out the reaction a plastoquinone + NADH + (n+1) H(+)(in) = a plastoquinol + NAD(+) + n H(+)(out). The catalysed reaction is a plastoquinone + NADPH + (n+1) H(+)(in) = a plastoquinol + NADP(+) + n H(+)(out). NDH shuttles electrons from NAD(P)H:plastoquinone, via FMN and iron-sulfur (Fe-S) centers, to quinones in the photosynthetic chain and possibly in a chloroplast respiratory chain. The immediate electron acceptor for the enzyme in this species is believed to be plastoquinone. Couples the redox reaction to proton translocation, and thus conserves the redox energy in a proton gradient. The protein is NAD(P)H-quinone oxidoreductase subunit 2 B, chloroplastic of Agrostis stolonifera (Creeping bentgrass).